A 386-amino-acid chain; its full sequence is Glyceraldehyde-3-phosphate dehydrogenase, chloroplastic (386 aa).

A chloroplast-targeting transit peptide spans 1 to 45; it reads MAYFKAVAYLAALASAAAFNPGSSFVPRLNAPATQPKAAKMTGPT. Residues 58–59 and arginine 125 contribute to the NADP(+) site; that span reads RI. Residues 197–199, threonine 228, 257–258, and arginine 280 each bind D-glyceraldehyde 3-phosphate; these read SCT and TG. The Nucleophile role is filled by cysteine 198. Asparagine 362 is a binding site for NADP(+).

It belongs to the glyceraldehyde-3-phosphate dehydrogenase family. Homotetramer.

It localises to the plastid. The protein localises to the chloroplast. It catalyses the reaction D-glyceraldehyde 3-phosphate + phosphate + NADP(+) = (2R)-3-phospho-glyceroyl phosphate + NADPH + H(+). The enzyme catalyses D-glyceraldehyde 3-phosphate + phosphate + NAD(+) = (2R)-3-phospho-glyceroyl phosphate + NADH + H(+). It functions in the pathway carbohydrate biosynthesis; Calvin cycle. The polypeptide is Glyceraldehyde-3-phosphate dehydrogenase, chloroplastic (GAPC1) (Guillardia theta (Cryptophyte)).